A 111-amino-acid chain; its full sequence is Class I hydrophobin 2 (111 aa).

An N-terminal signal peptide occupies residues 1-21 (MFSRVMFCTFLILPLLAAATA). 4 disulfides stabilise this stretch: Cys-30/Cys-90, Cys-37/Cys-84, Cys-38/Cys-71, and Cys-91/Cys-104.

This sequence belongs to the fungal hydrophobin family. As to quaternary structure, self-assembles to form functional amyloid fibrils called rodlets. Self-assembly into fibrillar rodlets occurs spontaneously at hydrophobic:hydrophilic interfaces and the rodlets further associate laterally to form amphipathic monolayers. Behavior depends on environmental conditions: (1) when the pH increases or in the presence of Ca(2+) ions, an assembled state, beta-sheet rich, is formed; (2) when the solvent polarity increases, the vhm2 shows an increased tendency to reach hydrophobic/hydrophilic interfaces, with no detectable conformational change; and (3) at high temperature, a reversible conformational change and reversible aggregation occur. The physical and chemical properties, both in solution and as a biofilm, are affected by polysaccharides that act as hydrophilic stabilizer.

The protein localises to the secreted. The protein resides in the cell wall. Its function is as follows. Aerial growth, conidiation, and dispersal of filamentous fungi in the environment rely upon a capability of their secreting small amphipathic proteins called hydrophobins (HPBs) with low sequence identity. Class I can self-assemble into an outermost layer of rodlet bundles on aerial cell surfaces, conferring cellular hydrophobicity that supports fungal growth, development and dispersal; whereas Class II form highly ordered films at water-air interfaces through intermolecular interactions but contribute nothing to the rodlet structure. Vmh2 is a class I hydrophobin involved in biofilm formation and is essential for the maintenance of the surface hydrophobicity of the mycelium. Seems not to be involved in hyphal resistance against environmental stress. The chain is Class I hydrophobin 2 from Pleurotus ostreatus (strain PC15) (Oyster mushroom).